A 276-amino-acid chain; its full sequence is N-acetylmuramoyl-L-alanine amidase AmiD (276 aa).

The N-terminal stretch at 1–16 (MRRFFWLVAAALLLAG) is a signal peptide. A lipid anchor (N-palmitoyl cysteine) is attached at C17. The S-diacylglycerol cysteine moiety is linked to residue C17. The N-acetylmuramoyl-L-alanine amidase domain occupies 42 to 179 (PRIKVLVIHY…APQRKDDPGP (138 aa)). Zn(2+) is bound at residue H50. Substrate is bound at residue 51–52 (YT). The active-site Proton acceptor is E119. Zn(2+) contacts are provided by H166 and D176.

This sequence belongs to the N-acetylmuramoyl-L-alanine amidase 2 family. Zn(2+) serves as cofactor.

The protein resides in the cell outer membrane. It carries out the reaction Hydrolyzes the link between N-acetylmuramoyl residues and L-amino acid residues in certain cell-wall glycopeptides.. This is N-acetylmuramoyl-L-alanine amidase AmiD (amiD) from Escherichia coli (strain K12).